The chain runs to 397 residues: Tryptophan synthase beta chain (397 aa).

N6-(pyridoxal phosphate)lysine is present on lysine 89.

It belongs to the TrpB family. In terms of assembly, tetramer of two alpha and two beta chains. It depends on pyridoxal 5'-phosphate as a cofactor.

The enzyme catalyses (1S,2R)-1-C-(indol-3-yl)glycerol 3-phosphate + L-serine = D-glyceraldehyde 3-phosphate + L-tryptophan + H2O. It participates in amino-acid biosynthesis; L-tryptophan biosynthesis; L-tryptophan from chorismate: step 5/5. Functionally, the beta subunit is responsible for the synthesis of L-tryptophan from indole and L-serine. This is Tryptophan synthase beta chain from Leptospira interrogans serogroup Icterohaemorrhagiae serovar copenhageni (strain Fiocruz L1-130).